A 229-amino-acid chain; its full sequence is 5'-methylthioadenosine/S-adenosylhomocysteine nucleosidase (229 aa).

The Proton acceptor role is filled by Glu-12. Substrate contacts are provided by residues Gly-78, Met-152, and Met-173–Glu-174. Asp-197 acts as the Proton donor in catalysis.

This sequence belongs to the PNP/UDP phosphorylase family. MtnN subfamily.

The enzyme catalyses S-adenosyl-L-homocysteine + H2O = S-(5-deoxy-D-ribos-5-yl)-L-homocysteine + adenine. It catalyses the reaction S-methyl-5'-thioadenosine + H2O = 5-(methylsulfanyl)-D-ribose + adenine. It carries out the reaction 5'-deoxyadenosine + H2O = 5-deoxy-D-ribose + adenine. It participates in amino-acid biosynthesis; L-methionine biosynthesis via salvage pathway; S-methyl-5-thio-alpha-D-ribose 1-phosphate from S-methyl-5'-thioadenosine (hydrolase route): step 1/2. Its function is as follows. Catalyzes the irreversible cleavage of the glycosidic bond in both 5'-methylthioadenosine (MTA) and S-adenosylhomocysteine (SAH/AdoHcy) to adenine and the corresponding thioribose, 5'-methylthioribose and S-ribosylhomocysteine, respectively. Also cleaves 5'-deoxyadenosine, a toxic by-product of radical S-adenosylmethionine (SAM) enzymes, into 5-deoxyribose and adenine. In Oceanobacillus iheyensis (strain DSM 14371 / CIP 107618 / JCM 11309 / KCTC 3954 / HTE831), this protein is 5'-methylthioadenosine/S-adenosylhomocysteine nucleosidase.